The primary structure comprises 253 residues: Beta-crystallin B1 (253 aa).

Residues 1-18 (MSQPAAKASATAAVNPGP) show a composition bias toward low complexity. Residues 1–53 (MSQPAAKASATAAVNPGPDGKGKAGPPPGPAPGSGPAPAPAPAPAQPAPAAKA) form a disordered region. An N-acetylserine modification is found at S2. The tract at residues 2 to 59 (SQPAAKASATAAVNPGPDGKGKAGPPPGPAPGSGPAPAPAPAPAQPAPAAKAELPPGS) is N-terminal arm. A compositionally biased stretch (pro residues) spans 25 to 47 (GPPPGPAPGSGPAPAPAPAPAQP). 2 Beta/gamma crystallin 'Greek key' domains span residues 60 to 99 (YKLVVFEQENFQGRRVEFSGECLNLGDRGFERVRSIIVTS) and 100 to 144 (GPWV…RPIK). Residues 145 to 149 (MDAQE) form a connecting peptide region. 2 consecutive Beta/gamma crystallin 'Greek key' domains span residues 150 to 191 (HKLC…RVSS) and 192 to 234 (GTWV…RRLR). Residues 236–253 (RQWHREGCFPVLAAEPPK) form a C-terminal arm region.

It belongs to the beta/gamma-crystallin family. Homo/heterodimer, or complexes of higher-order. The structure of beta-crystallin oligomers seems to be stabilized through interactions between the N-terminal arms. Specific cleavages in the N-terminal arm occur during lens maturation and give rise to truncated forms, leading to impaired oligomerization and protein insolubilization.

Its function is as follows. Crystallins are the dominant structural components of the vertebrate eye lens. In Bos taurus (Bovine), this protein is Beta-crystallin B1 (CRYBB1).